Consider the following 125-residue polypeptide: Large ribosomal subunit protein bL12 (125 aa).

This sequence belongs to the bacterial ribosomal protein bL12 family. Homodimer. Part of the ribosomal stalk of the 50S ribosomal subunit. Forms a multimeric L10(L12)X complex, where L10 forms an elongated spine to which 2 to 4 L12 dimers bind in a sequential fashion. Binds GTP-bound translation factors.

Forms part of the ribosomal stalk which helps the ribosome interact with GTP-bound translation factors. Is thus essential for accurate translation. This is Large ribosomal subunit protein bL12 from Rickettsia africae (strain ESF-5).